Consider the following 161-residue polypeptide: Phosphotransferase enzyme IIB component GlvB (161 aa).

A helical transmembrane segment spans residues 10–32 (LTQIAIGLCFTLLYFVVFRTLIL). One can recognise a PTS EIIB type-1 domain in the interval 70-152 (LDQAAGILQA…DSLINSHQSA (83 aa)). Cysteine 92 functions as the Phosphocysteine intermediate in the catalytic mechanism.

Its subcellular location is the cell inner membrane. The phosphoenolpyruvate-dependent sugar phosphotransferase system (sugar PTS), a major carbohydrate active -transport system, catalyzes the phosphorylation of incoming sugar substrates concomitantly with their translocation across the cell membrane. This operon may be cryptic in wild-type K12 strains. The chain is Phosphotransferase enzyme IIB component GlvB from Escherichia coli (strain K12).